Reading from the N-terminus, the 1844-residue chain is ATPase family AAA domain-containing protein 5 (1844 aa).

At S44 the chain carries Phosphoserine. Residue K127 forms a Glycyl lysine isopeptide (Lys-Gly) (interchain with G-Cter in SUMO2) linkage. Positions 178–199 (QPNTMTSLQNSKKVNPKQGTTK) are enriched in polar residues. The tract at residues 178–204 (QPNTMTSLQNSKKVNPKQGTTKNDFKK) is disordered. S219, S306, S311, S354, and S369 each carry phosphoserine. The interval 368 to 384 (KSNVVIQEEELELAVLE) is interaction with WDR48. 3 disordered regions span residues 477 to 499 (KLKK…REGN), 580 to 623 (ESEA…NSQL), and 658 to 700 (KFTR…SKNI). 2 stretches are compositionally biased toward polar residues: residues 580–592 (ESEA…STPK) and 599–608 (RISSTPTTET). 3 positions are modified to phosphoserine: S602, S614, and S621. Basic residues predominate over residues 664 to 673 (TPKKSKKKSN). Over residues 685–700 (GFTSQIRKASNTSKNI) the composition is skewed to polar residues. S817 carries the phosphoserine modification. Basic and acidic residues-rich tracts occupy residues 987 to 1032 (LEAD…ELSK) and 1092 to 1106 (RQNL…HEDF). 2 disordered regions span residues 987–1047 (LEAD…SKDS) and 1092–1118 (RQNL…SSDD). The residue at position 1116 (S1116) is a Phosphoserine. 1132-1139 (GPTGVGKT) contacts ATP. Disordered regions lie at residues 1203-1235 (KKIS…LPPK) and 1272-1292 (ITQT…GAEE). A compositionally biased stretch (polar residues) spans 1272–1285 (ITQTKSTNATNSNV). The LXCXE motif signature appears at 1428-1432 (LVCSE). Residues 1591–1635 (SLSSVSSSSNAEESKTGDEESKARDKGNNPETKKSIPCPPKTTAG) are disordered. Residues 1602–1624 (EESKTGDEESKARDKGNNPETKK) are compositionally biased toward basic and acidic residues. Residues 1630 to 1719 (PKTTAGKKCS…AAAEALSFTK (90 aa)) form an interaction with RAD51 and RFC5 region.

It belongs to the AAA ATPase family. As to quaternary structure, component of a heteropentameric replication factor ATAD5 RFC-like complex composed of one large subunit (ATAD5) and four small subunits (RFC2, RFC3, RFC4 and RFC5). Within the ATAD5 RFC-like complex, interacts with RFC2, RFC4 and RFC5. Within the ATAD5 RFC-like complex, interacts directly via-N terminal with RAD51; the interactions is enhanced under replication stress. Interacts with RB1 predominantly in G1 phase via its LXCXE motif. Interacts with RAD9A in growing cells. The interaction with RAD9A is reduced after exposure to DNA replication-inhibiting agents. Interacts with BRD4. Interacts with PCNA. Interacts with deubiquitinating enzyme USP1, and its associated factor, WDR48. ATR may stimulate the RAD9A dissociation.

It localises to the nucleus. Its function is as follows. Has an important role in DNA replication and in maintaining genome integrity during replication stress. Involved in a RAD9A-related damage checkpoint, a pathway that is important in determining whether DNA damage is compatible with cell survival or whether it requires cell elimination by apoptosis. Modulates the RAD9A interaction with BCL2 and thereby induces DNA damage-induced apoptosis. Promotes PCNA deubiquitination by recruiting the ubiquitin-specific protease 1 (USP1) and WDR48 thereby down-regulating the error-prone damage bypass pathway. As component of the ATAD5 RFC-like complex, regulates the function of the DNA polymerase processivity factor PCNA by unloading the ring-shaped PCNA homotrimer from DNA after replication during the S phase of the cell cycle. This seems to be dependent on its ATPase activity. Plays important roles in restarting stalled replication forks under replication stress, by unloading the PCNA homotrimer from DNA and recruiting RAD51 possibly through an ATR-dependent manner. Ultimately this enables replication fork regression, breakage, and eventual fork restart. Both the PCNA unloading activity and the interaction with WDR48 are required to efficiently recruit RAD51 to stalled replication forks. Promotes the generation of MUS81-mediated single-stranded DNA-associated breaks in response to replication stress, which is an alternative pathway to restart stalled/regressed replication forks. This chain is ATPase family AAA domain-containing protein 5, found in Homo sapiens (Human).